Here is a 504-residue protein sequence, read N- to C-terminus: UDP-glycosyltransferase UGT4 (504 aa).

Residues M1–G23 form the signal peptide. The Lumenal portion of the chain corresponds to E24 to Q474. N54, N66, N69, and N422 each carry an N-linked (GlcNAc...) asparagine glycan. The chain crosses the membrane as a helical span at residues Y475 to L495. Residues R496 to K504 lie on the Cytoplasmic side of the membrane.

It belongs to the UDP-glycosyltransferase family.

It is found in the microsome membrane. Catalyzes the transfer of a glycosyl group from a UDP-sugar to an acceptor molecule. The sequence is that of UDP-glycosyltransferase UGT4 from Dactylopius coccus (Cochineal).